Here is a 133-residue protein sequence, read N- to C-terminus: Small ribosomal subunit protein uS8 (133 aa).

The protein belongs to the universal ribosomal protein uS8 family. As to quaternary structure, part of the 30S ribosomal subunit.

Functionally, one of the primary rRNA binding proteins, it binds directly to 16S rRNA central domain where it helps coordinate assembly of the platform of the 30S subunit. This Hyperthermus butylicus (strain DSM 5456 / JCM 9403 / PLM1-5) protein is Small ribosomal subunit protein uS8.